A 229-amino-acid polypeptide reads, in one-letter code: Urease accessory protein UreF (229 aa).

Belongs to the UreF family. UreD, UreF and UreG form a complex that acts as a GTP-hydrolysis-dependent molecular chaperone, activating the urease apoprotein by helping to assemble the nickel containing metallocenter of UreC. The UreE protein probably delivers the nickel.

Its subcellular location is the cytoplasm. Required for maturation of urease via the functional incorporation of the urease nickel metallocenter. In Staphylococcus epidermidis (strain ATCC 12228 / FDA PCI 1200), this protein is Urease accessory protein UreF.